Here is a 72-residue protein sequence, read N- to C-terminus: Conotoxin im23a (72 aa).

Positions 1–22 (MIMRMTLTLFVLVVMTAASASG) are cleaved as a signal peptide. A propeptide spanning residues 23–28 (DALTEA) is cleaved from the precursor. 3 disulfide bridges follow: Cys34–Cys41, Cys45–Cys55, and Cys56–Cys71.

It belongs to the conotoxin K superfamily. Expressed by the venom duct.

It localises to the secreted. Functionally, neurotoxin that induces excitatory symptoms in mice following intracranial administration. No symptoms are observed after intraperitoneal and intravenous (tail vein) injections. The chain is Conotoxin im23a from Conus imperialis (Imperial cone).